Reading from the N-terminus, the 212-residue chain is Thymidylate kinase (212 aa).

Residue 10–17 participates in ATP binding; the sequence is GPDGAGKT.

It belongs to the thymidylate kinase family.

The catalysed reaction is dTMP + ATP = dTDP + ADP. In terms of biological role, phosphorylation of dTMP to form dTDP in both de novo and salvage pathways of dTTP synthesis. This is Thymidylate kinase from Lactobacillus delbrueckii subsp. bulgaricus (strain ATCC 11842 / DSM 20081 / BCRC 10696 / JCM 1002 / NBRC 13953 / NCIMB 11778 / NCTC 12712 / WDCM 00102 / Lb 14).